Reading from the N-terminus, the 61-residue chain is Large ribosomal subunit protein uL30 (61 aa).

This sequence belongs to the universal ribosomal protein uL30 family. In terms of assembly, part of the 50S ribosomal subunit.

This is Large ribosomal subunit protein uL30 from Methylococcus capsulatus (strain ATCC 33009 / NCIMB 11132 / Bath).